The sequence spans 219 residues: 2-C-methyl-D-erythritol 4-phosphate cytidylyltransferase (219 aa).

This sequence belongs to the IspD/TarI cytidylyltransferase family. IspD subfamily.

It catalyses the reaction 2-C-methyl-D-erythritol 4-phosphate + CTP + H(+) = 4-CDP-2-C-methyl-D-erythritol + diphosphate. Its pathway is isoprenoid biosynthesis; isopentenyl diphosphate biosynthesis via DXP pathway; isopentenyl diphosphate from 1-deoxy-D-xylulose 5-phosphate: step 2/6. Its function is as follows. Catalyzes the formation of 4-diphosphocytidyl-2-C-methyl-D-erythritol from CTP and 2-C-methyl-D-erythritol 4-phosphate (MEP). In Bacteroides fragilis (strain ATCC 25285 / DSM 2151 / CCUG 4856 / JCM 11019 / LMG 10263 / NCTC 9343 / Onslow / VPI 2553 / EN-2), this protein is 2-C-methyl-D-erythritol 4-phosphate cytidylyltransferase.